Here is a 661-residue protein sequence, read N- to C-terminus: UvrABC system protein B (661 aa).

One can recognise a Helicase ATP-binding domain in the interval 25-178 (EGILKGEKFQ…DEVIRDLIRM (154 aa)). Residue 38-45 (GVTGSGKT) participates in ATP binding. Positions 91-114 (YYDYYQPEAYIPETDTYIEKDSSI) match the Beta-hairpin motif. Positions 429 to 591 (QIDHLIGEIR…IVPQTVRKGI (163 aa)) constitute a Helicase C-terminal domain. Residues 625 to 660 (EEYIKELEQEMKKLAIELEFEKAAKVRDKIFELKKL) form the UVR domain.

Belongs to the UvrB family. Forms a heterotetramer with UvrA during the search for lesions. Interacts with UvrC in an incision complex.

Its subcellular location is the cytoplasm. The UvrABC repair system catalyzes the recognition and processing of DNA lesions. A damage recognition complex composed of 2 UvrA and 2 UvrB subunits scans DNA for abnormalities. Upon binding of the UvrA(2)B(2) complex to a putative damaged site, the DNA wraps around one UvrB monomer. DNA wrap is dependent on ATP binding by UvrB and probably causes local melting of the DNA helix, facilitating insertion of UvrB beta-hairpin between the DNA strands. Then UvrB probes one DNA strand for the presence of a lesion. If a lesion is found the UvrA subunits dissociate and the UvrB-DNA preincision complex is formed. This complex is subsequently bound by UvrC and the second UvrB is released. If no lesion is found, the DNA wraps around the other UvrB subunit that will check the other stand for damage. This chain is UvrABC system protein B, found in Caldicellulosiruptor bescii (strain ATCC BAA-1888 / DSM 6725 / KCTC 15123 / Z-1320) (Anaerocellum thermophilum).